The chain runs to 246 residues: Eukaryotic translation initiation factor 6 (246 aa).

Ser-174 and Ser-175 each carry phosphoserine; by CK1.

It belongs to the eIF-6 family. As to quaternary structure, monomer. Associates with the 60S ribosomal subunit. Phosphorylation at Ser-174 and Ser-175 promotes nuclear export.

Its subcellular location is the cytoplasm. It localises to the nucleus. It is found in the nucleolus. Its function is as follows. Binds to the 60S ribosomal subunit and prevents its association with the 40S ribosomal subunit to form the 80S initiation complex in the cytoplasm. Is also involved in ribosome biogenesis. Associates with pre-60S subunits in the nucleus and is involved in its nuclear export. This Sordaria macrospora (strain ATCC MYA-333 / DSM 997 / K(L3346) / K-hell) protein is Eukaryotic translation initiation factor 6.